A 460-amino-acid chain; its full sequence is N-myc proto-oncogene protein (460 aa).

The segment at 19-47 (LEFDSLQPCFYPDEDDFYFGGPDSTPPGE) is interaction with AURKA. The tract at residues 61 to 90 (LSPSRAFSEQSPEPSDWATEMLLPEADLWG) is interaction with AURKA and FBXW7. The 9aaTAD signature appears at 76-85 (DWATEMLLPE). Disordered regions lie at residues 131 to 169 (VSEK…GAGR), 221 to 288 (AAAP…SNSK), and 330 to 388 (APSP…LERQ). The span at 138 to 158 (GRGPPAAGPATPGAGAANPAG) shows a compositional bias: low complexity. Positions 159–169 (RGHGGTAGAGR) are enriched in gly residues. Over residues 221–233 (AAAPASAAVAAPP) the composition is skewed to low complexity. Over residues 255–274 (TLSDSDDEDDEEEDEEEEID) the composition is skewed to acidic residues. A phosphoserine; by CK2 mark is found at Ser257 and Ser259. Residues 377–429 (ERRRNHNILERQRRNDLRSSFLTLRDHVPELVKNEKAAKVVILKKATEYVHSL) enclose the bHLH domain. The leucine-zipper stretch occupies residues 429–450 (LQAEEHQLLLEKEKLQARQQQL).

As to quaternary structure, efficient DNA binding requires dimerization with another bHLH protein. Binds DNA as a heterodimer with MAX. Interacts with KDM5A, KDM5B and HUWE1. Interacts with MYCNOS. Interacts with AURKA; interaction is phospho-independent and triggers AURKA activation; AURKA competes with FBXW7 for binding to unphosphorylated MYCN but not for binding to unphosphorylated MYCN. Interacts with FBXW7; FBXW7 competes with AURKA for binding to unphosphorylated MYCN but not for binding to phosphorylated MYCN. Phosphorylated by GSK3-beta which may promote its degradation. Phosphorylated by AURKA.

It is found in the nucleus. Functionally, positively regulates the transcription of MYCNOS in neuroblastoma cells. In Marmota monax (Woodchuck), this protein is N-myc proto-oncogene protein (MYCN).